We begin with the raw amino-acid sequence, 340 residues long: NADH-quinone oxidoreductase subunit H (340 aa).

8 helical membrane passes run 4 to 24, 78 to 98, 113 to 133, 151 to 171, 184 to 204, 244 to 264, 273 to 293, and 316 to 336; these read TIGI…PLLI, YLFV…WAVI, VLYL…AGWA, VSYE…AGSM, MLHW…ISGI, SMIL…LSPF, IFFI…FLFV, and VLIP…VAHV.

It belongs to the complex I subunit 1 family. NDH-1 is composed of 14 different subunits. Subunits NuoA, H, J, K, L, M, N constitute the membrane sector of the complex.

The protein localises to the cell inner membrane. The catalysed reaction is a quinone + NADH + 5 H(+)(in) = a quinol + NAD(+) + 4 H(+)(out). Its function is as follows. NDH-1 shuttles electrons from NADH, via FMN and iron-sulfur (Fe-S) centers, to quinones in the respiratory chain. The immediate electron acceptor for the enzyme in this species is believed to be ubiquinone. Couples the redox reaction to proton translocation (for every two electrons transferred, four hydrogen ions are translocated across the cytoplasmic membrane), and thus conserves the redox energy in a proton gradient. This subunit may bind ubiquinone. The polypeptide is NADH-quinone oxidoreductase subunit H (Legionella pneumophila subsp. pneumophila (strain Philadelphia 1 / ATCC 33152 / DSM 7513)).